A 144-amino-acid chain; its full sequence is Catabolic 3-dehydroquinase 1 (144 aa).

Tyr-24 (proton acceptor) is an active-site residue. Substrate is bound by residues Asn-75, His-81, and Asp-88. His-101 functions as the Proton donor in the catalytic mechanism. Residues Ile-102–Ser-103 and Arg-112 contribute to the substrate site.

The protein belongs to the type-II 3-dehydroquinase family. Homododecamer. Adopts a ring-like structure, composed of an arrangement of two hexameric rings stacked on top of one another.

It catalyses the reaction 3-dehydroquinate = 3-dehydroshikimate + H2O. It functions in the pathway aromatic compound metabolism; 3,4-dihydroxybenzoate biosynthesis; 3,4-dihydroxybenzoate from 3-dehydroquinate: step 1/2. Its function is as follows. Is involved in the catabolism of quinate. Allows the utilization of quinate as carbon source via the beta-ketoadipate pathway. This is Catabolic 3-dehydroquinase 1 from Fusarium vanettenii (strain ATCC MYA-4622 / CBS 123669 / FGSC 9596 / NRRL 45880 / 77-13-4) (Fusarium solani subsp. pisi).